Reading from the N-terminus, the 549-residue chain is Maturase K (549 aa).

The protein belongs to the intron maturase 2 family. MatK subfamily.

It localises to the plastid. Its subcellular location is the chloroplast. Functionally, usually encoded in the trnK tRNA gene intron. Probably assists in splicing its own and other chloroplast group II introns. The sequence is that of Maturase K from Albidella oligococca (Caldesia oligococca).